Here is a 110-residue protein sequence, read N- to C-terminus: UPF0145 protein (110 aa).

Belongs to the UPF0145 family.

The sequence is that of UPF0145 protein from Listeria welshimeri.